Reading from the N-terminus, the 276-residue chain is UPF0276 protein AM1_3026 (276 aa).

It belongs to the UPF0276 family.

This Acaryochloris marina (strain MBIC 11017) protein is UPF0276 protein AM1_3026.